The chain runs to 143 residues: High mobility group protein B (143 aa).

The tract at residues 1 to 22 (MSKAASQYATLEDLPSKPKRPQ) is disordered. The HMG box DNA-binding region spans 18–86 (PKRPQTGFFI…TYDKQNDQWK (69 aa)). Ala-70 carries the post-translational modification Blocked amino end (Ala). Composition is skewed to basic and acidic residues over residues 100–120 (AKKA…ELEK) and 131–143 (AKKD…AKKK). Residues 100–143 (AKKALKEKTKKSKAAEKELEKSKKKAPAAAPAKKDDKKAPAKKK) form a disordered region.

It is found in the nucleus. It localises to the chromosome. The protein is High mobility group protein B of Tetrahymena thermophila.